The following is a 150-amino-acid chain: uncharacterized protein (150 aa).

Residues 3–145 form the Flavodoxin-like domain; that stretch reads VAILSGSVYG…DAEPWLAEFA (143 aa).

The protein belongs to the flavodoxin family. MioC subfamily. FMN is required as a cofactor.

Probable electron transporter. This is an uncharacterized protein from Pseudomonas aeruginosa (strain ATCC 15692 / DSM 22644 / CIP 104116 / JCM 14847 / LMG 12228 / 1C / PRS 101 / PAO1).